The sequence spans 298 residues: Bifunctional protein FolD (298 aa).

NADP(+) is bound by residues 166 to 168 (GRS), Ser191, and Ile232.

The protein belongs to the tetrahydrofolate dehydrogenase/cyclohydrolase family. Homodimer.

The enzyme catalyses (6R)-5,10-methylene-5,6,7,8-tetrahydrofolate + NADP(+) = (6R)-5,10-methenyltetrahydrofolate + NADPH. The catalysed reaction is (6R)-5,10-methenyltetrahydrofolate + H2O = (6R)-10-formyltetrahydrofolate + H(+). The protein operates within one-carbon metabolism; tetrahydrofolate interconversion. In terms of biological role, catalyzes the oxidation of 5,10-methylenetetrahydrofolate to 5,10-methenyltetrahydrofolate and then the hydrolysis of 5,10-methenyltetrahydrofolate to 10-formyltetrahydrofolate. This Parvibaculum lavamentivorans (strain DS-1 / DSM 13023 / NCIMB 13966) protein is Bifunctional protein FolD.